The sequence spans 122 residues: MIQSQTYLNVADNSGARKIMCIRVLGGSQRQYATIGDVIIAVVKDSVPNMALKRSEVVRAVVVRTRKGLRRDNGMTIRFDDNAAVVINKEGNPRGTRVFGPVARELRDRNFTKIVSLAPEVL.

Belongs to the universal ribosomal protein uL14 family. As to quaternary structure, part of the 50S ribosomal subunit.

It is found in the plastid. The protein resides in the chloroplast. Binds to 23S rRNA. This Chlorokybus atmophyticus (Soil alga) protein is Large ribosomal subunit protein uL14c.